We begin with the raw amino-acid sequence, 445 residues long: CBL-interacting protein kinase 3 (445 aa).

The Protein kinase domain occupies 19–274 (YELGRAIGQG…TSQVLQDQWF (256 aa)). ATP contacts are provided by residues 25-33 (IGQGTFAKV) and lysine 48. Aspartate 142 functions as the Proton acceptor in the catalytic mechanism. The interval 160-189 (DFGLSAISEQVKADGLLHTTCGTPNYVAPE) is activation loop. Residues 309–336 (AMEEQPTLMNAFELISLNKGLNLDNFFE) enclose the NAF domain. Residues 342-371 (KRETRFTSQCPPKEIINRIEEAANLLGFNI) are PPI.

This sequence belongs to the protein kinase superfamily. CAMK Ser/Thr protein kinase family. SNF1 subfamily. The cofactor is Mn(2+).

The enzyme catalyses L-seryl-[protein] + ATP = O-phospho-L-seryl-[protein] + ADP + H(+). The catalysed reaction is L-threonyl-[protein] + ATP = O-phospho-L-threonyl-[protein] + ADP + H(+). Its function is as follows. CIPK serine-threonine protein kinases interact with CBL proteins. Binding of a CBL protein to the regulatory NAF domain of CIPK protein lead to the activation of the kinase in a calcium-dependent manner. This Oryza sativa subsp. japonica (Rice) protein is CBL-interacting protein kinase 3 (CIPK3).